We begin with the raw amino-acid sequence, 520 residues long: Cytochrome P450 1A1 (520 aa).

Phe230 is a binding site for substrate. Cys464 is a binding site for heme.

The protein belongs to the cytochrome P450 family. It depends on heme as a cofactor.

Its subcellular location is the endoplasmic reticulum membrane. It localises to the microsome membrane. It carries out the reaction an organic molecule + reduced [NADPH--hemoprotein reductase] + O2 = an alcohol + oxidized [NADPH--hemoprotein reductase] + H2O + H(+). Cytochromes P450 are a group of heme-thiolate monooxygenases. In liver microsomes, this enzyme is involved in an NADPH-dependent electron transport pathway. It oxidizes a variety of structurally unrelated compounds, including steroids, fatty acids, and xenobiotics. The sequence is that of Cytochrome P450 1A1 (cyp1a1) from Dicentrarchus labrax (European seabass).